The primary structure comprises 150 residues: Dual specificity protein phosphatase 23 (150 aa).

The region spanning 7–150 is the Tyrosine-protein phosphatase domain; the sequence is NFSWVLPGRL…AVFQFYQRTK (144 aa). Cys95 functions as the Phosphocysteine intermediate in the catalytic mechanism.

Belongs to the protein-tyrosine phosphatase family. Non-receptor class dual specificity subfamily. In terms of tissue distribution, widely expressed. Highly expressed in spleen, prostate, colon, adrenal gland, mammary gland, thyroid and trachea. Expressed at lower level in uterus, small intestine, bladder, bone marrow, brain, spinal cord and stomach.

It localises to the cytoplasm. The protein resides in the cytosol. Its subcellular location is the nucleus. The catalysed reaction is O-phospho-L-tyrosyl-[protein] + H2O = L-tyrosyl-[protein] + phosphate. It carries out the reaction O-phospho-L-seryl-[protein] + H2O = L-seryl-[protein] + phosphate. The enzyme catalyses O-phospho-L-threonyl-[protein] + H2O = L-threonyl-[protein] + phosphate. Functionally, protein phosphatase that mediates dephosphorylation of proteins phosphorylated on Tyr and Ser/Thr residues. In vitro, it can dephosphorylate p44-ERK1 (MAPK3) but not p54 SAPK-beta (MAPK10) in vitro. Able to enhance activation of JNK and p38 (MAPK14). The polypeptide is Dual specificity protein phosphatase 23 (DUSP23) (Homo sapiens (Human)).